We begin with the raw amino-acid sequence, 314 residues long: Zinc transporter ZIP3 (314 aa).

The Extracellular portion of the chain corresponds to 1–3; it reads MNL. A helical transmembrane segment spans residues 4-24; sequence IFAKVLCLLAILVLMMLGSLI. The Cytoplasmic segment spans residues 25–41; that stretch reads PVKISEADFDKSSRSRK. Residues 42-62 form a helical membrane-spanning segment; it reads ILSLSNSFAGGVFLATCFNAL. At 63 to 84 the chain is on the extracellular side; sequence LPAVREKFFDLLKIGNISTDYP. Residues 85–105 traverse the membrane as a helical segment; it reads LAETIMMVGFFLTVFVEQTVM. The Cytoplasmic portion of the chain corresponds to 106–169; sequence TFRKEKPSFI…KELSSSSPIR (64 aa). A helical transmembrane segment spans residues 170-190; that stretch reads LFSLVFALSAHSVFEGLALGL. Over 191-196 the chain is Extracellular; it reads QEDGNK. Residues 197–217 form a helical membrane-spanning segment; sequence LLSLFIGVVIHETLVAMALGV. The Cytoplasmic segment spans residues 218–229; it reads SMAKVNTHLKDA. A helical membrane pass occupies residues 230 to 250; sequence IKMAVLVSTMIPIGIVVGMAI. At 251–262 the chain is on the extracellular side; that stretch reads QSAQNMASSIAS. A helical membrane pass occupies residues 263–283; the sequence is ALLQGIAGGTFIFVTFFEILV. Over 284–292 the chain is Cytoplasmic; sequence KELEEKNDR. Residues 293–313 traverse the membrane as a helical segment; that stretch reads LLKVLFLVLGYTVLAVLVLFK. Tryptophan 314 is a topological domain (extracellular).

The protein belongs to the ZIP transporter (TC 2.A.5) family.

It localises to the cell membrane. The protein resides in the apical cell membrane. The enzyme catalyses Zn(2+)(in) = Zn(2+)(out). Transporter for the divalent cation Zn(2+). Mediates the influx of Zn(2+) into cells from extracellular space. In Xenopus tropicalis (Western clawed frog), this protein is Zinc transporter ZIP3 (slc39a3).